The chain runs to 1365 residues: Polyprotein ABA-1 (1365 aa).

The protein belongs to the NPA family. Post-translationally, nematode polyprotein allergens (NPAs) are synthesized as large polypeptides that are subsequently proteolytically cleaved to active polypeptide units. As to expression, pseudocoelomic fluid.

Has high binding affinity for fatty acids and retinoids. This Ascaris suum (Pig roundworm) protein is Polyprotein ABA-1 (ABA-1).